The sequence spans 62 residues: uncharacterized protein (62 aa).

This is an uncharacterized protein from Bacillus subtilis (strain 168).